Reading from the N-terminus, the 64-residue chain is Short neurotoxin 1 (64 aa).

4 disulfide bridges follow: Cys3-Cys26, Cys20-Cys43, Cys45-Cys56, and Cys57-Cys62.

The protein belongs to the three-finger toxin family. Short-chain subfamily. Type I alpha-neurotoxin sub-subfamily. As to expression, expressed by the venom gland.

The protein localises to the secreted. Binds to muscle nicotinic acetylcholine receptor (nAChR) and inhibit acetylcholine from binding to the receptor, thereby impairing neuromuscular transmission. The polypeptide is Short neurotoxin 1 (Bungarus fasciatus (Banded krait)).